Consider the following 529-residue polypeptide: MDAAALWQRYQDWLYYHEQLGIYVDISRMSFDDAFVERLEPKFVKAFKEMDALEAGAIANPDENRMVGHYWLRDSNLAPTPELKKEIITTLEKIEAFAADVHAGRIKPATAPRFTDVISIGIGGSSLGPQFVSQALAVLHPALELHFIDNTDPAGIDYILDRVQDRLDTTLVVTISKSGGTPETRNGMLEAKNRFKNLGLDFPKHAVAVTGYGSKLAQIAEEEGWLAMLPMHDWVGGRTSELSAVGLVPASLQGIAIREMLAGAKAMDEATRVHDLKTNPAALLALSWYFAGEGAGKKDMVILPYKDSLMLFSRYLQQLVMESLGKEKDLDDKIVHQGIAVYGNKGSTDQHAYVQELREGIPNFFLTFIEVLKDRDGTRFEVEPGVTSGDYLSGFLLGTREALYEKRRDSITVTLPEVTSKQVGALIALYERAVGLYASLINVNAYHQPGVEAGKKAATDTIALQNKIVQILRNTLTPLPITSLADKAEAPDKIETVYKIVRHLAANKRGVELYGNPAEPGSLQVTLKG.

The Proton donor role is filled by Glu322. Active-site residues include His351 and Lys455.

Belongs to the GPI family.

The protein resides in the cytoplasm. The catalysed reaction is alpha-D-glucose 6-phosphate = beta-D-fructose 6-phosphate. It functions in the pathway carbohydrate biosynthesis; gluconeogenesis. The protein operates within carbohydrate degradation; glycolysis; D-glyceraldehyde 3-phosphate and glycerone phosphate from D-glucose: step 2/4. In terms of biological role, catalyzes the reversible isomerization of glucose-6-phosphate to fructose-6-phosphate. This is Glucose-6-phosphate isomerase from Acaryochloris marina (strain MBIC 11017).